A 599-amino-acid polypeptide reads, in one-letter code: Protein ref(2)P (599 aa).

Residues 3-88 (EKLLKITYQG…CESNMHVQVA (86 aa)) enclose the PB1 domain. The ZZ-type zinc finger occupies 122–173 (HDSVQCDGCGLAPLIGFRYKCVQCSNFDLCQKCESAHKHPEHLMLRMPTNNG). Residues C127, C130, C142, C145, C151, C154, H160, and H163 each coordinate Zn(2+). Disordered stretches follow at residues 192–225 (RRSRGHCPFQEASQPAPAAEPARDSRRERRHARR), 245–319 (TTAT…INLD), 357–453 (GIFA…LDPE), and 507–544 (ASANTQTAQVDTVSTSTSTTSVTTNSVGTSPAAPDDKR). The span at 199–211 (PFQEASQPAPAAE) shows a compositional bias: low complexity. Residues 276 to 286 (KATESEAKPTE) show a composition bias toward basic and acidic residues. Residues 291–319 (NTDQSVPTTEDPVTTPRSTEPTTPVINLD) show a composition bias toward polar residues. The span at 375 to 411 (QSQSSGQSAASSASQSAVPSAAPSANQSNVPSANQSA) shows a compositional bias: low complexity. 3 consecutive repeat copies span residues 386 to 393 (SASQSAVP), 399 to 406 (ANQSNVPS), and 407 to 413 (ANQSATP). Positions 386-413 (SASQSAVPSAAPSANQSNVPSANQSATP) are 3 X 8 AA repeats of S-A-N-Q-S-X-X-P. The segment covering 412–423 (TPSISGSISDAQ) has biased composition (polar residues). The span at 511–536 (TQTAQVDTVSTSTSTTSVTTNSVGTS) shows a compositional bias: low complexity. The region spanning 550-595 (HTDERINQSIHAMMAMGFSNEGAWLTQLLESVQGNIPAALDVMHVS) is the UBA domain.

Interacts with aPKC and Traf6.

It is found in the nucleus. It localises to the cytoplasm. In terms of biological role, required for selective autophagy activation by ubiquitinated proteins. Implicated in sigma rhabdovirus multiplication and necessary for male fertility. Involved in activating transcription of Drs. The sequence is that of Protein ref(2)P (ref(2)P) from Drosophila simulans (Fruit fly).